Consider the following 286-residue polypeptide: MASGKEIKSKIGSIKNTQKITSAMEMVAASKMKRAQERVATSRPYAAKLRTVIGRVAQANLDFTHPFLEEREVKRVGYIVISTDRGLCGGLNSNEFKKVALDIKAWKEKGVSAEFATLGSKAAGFFQRFGGQVLAKKAGLGDKPSIQDIIGPVKVMLDAFSEGKIDRLFLVYNKFVNTMKQEPTVDQLLPLPKAEEEVSAHTWDYLYEPNPDAILEALLVRFVESQVYQGVVENAASEQAARMVAMKAATDNAGDLMDELQLIYNKARQAAITQEISEICSGSAAV.

It belongs to the ATPase gamma chain family. F-type ATPases have 2 components, CF(1) - the catalytic core - and CF(0) - the membrane proton channel. CF(1) has five subunits: alpha(3), beta(3), gamma(1), delta(1), epsilon(1). CF(0) has three main subunits: a, b and c.

The protein resides in the cell inner membrane. In terms of biological role, produces ATP from ADP in the presence of a proton gradient across the membrane. The gamma chain is believed to be important in regulating ATPase activity and the flow of protons through the CF(0) complex. This chain is ATP synthase gamma chain, found in Pseudoalteromonas translucida (strain TAC 125).